Reading from the N-terminus, the 400-residue chain is Elongation factor Tu (400 aa).

A tr-type G domain is found at 10–209; that stretch reads KEHVNIGTIG…QVDNWIDAPL (200 aa). Positions 19-26 are G1; it reads GHVDHGKT. A GTP-binding site is contributed by 19 to 26; it reads GHVDHGKT. T26 is a binding site for Mg(2+). The segment at 61–65 is G2; it reads GITIN. Residues 82–85 are G3; that stretch reads DCPG. Residues 82–86 and 137–140 each bind GTP; these read DCPGH and NKVD. A G4 region spans residues 137–140; it reads NKVD. The G5 stretch occupies residues 179–181; it reads SAL.

Belongs to the TRAFAC class translation factor GTPase superfamily. Classic translation factor GTPase family. EF-Tu/EF-1A subfamily. In terms of assembly, monomer.

It is found in the cytoplasm. The catalysed reaction is GTP + H2O = GDP + phosphate + H(+). Functionally, GTP hydrolase that promotes the GTP-dependent binding of aminoacyl-tRNA to the A-site of ribosomes during protein biosynthesis. The protein is Elongation factor Tu of Mycoplasma mobile (strain ATCC 43663 / 163K / NCTC 11711) (Mesomycoplasma mobile).